A 699-amino-acid polypeptide reads, in one-letter code: Integrator complex subunit 10 (699 aa).

A phosphoserine mark is found at serine 220 and serine 370. Lysine 453 participates in a covalent cross-link: Glycyl lysine isopeptide (Lys-Gly) (interchain with G-Cter in SUMO2).

Belongs to the Integrator subunit 10 family. Component of the Integrator complex, composed of core subunits INTS1, INTS2, INTS3, INTS4, INTS5, INTS6, INTS7, INTS8, INTS9/RC74, INTS10, INTS11/CPSF3L, INTS12, INTS13, INTS14 and INTS15. The core complex associates with protein phosphatase 2A subunits PPP2CA and PPP2R1A, to form the Integrator-PP2A (INTAC) complex. INTS10 is part of the tail subcomplex, composed of INTS10, INTS13, INTS14 and INTS15.

It is found in the nucleus. Functionally, component of the integrator complex, a multiprotein complex that terminates RNA polymerase II (Pol II) transcription in the promoter-proximal region of genes. The integrator complex provides a quality checkpoint during transcription elongation by driving premature transcription termination of transcripts that are unfavorably configured for transcriptional elongation: the complex terminates transcription by (1) catalyzing dephosphorylation of the C-terminal domain (CTD) of Pol II subunit POLR2A/RPB1 and SUPT5H/SPT5, (2) degrading the exiting nascent RNA transcript via endonuclease activity and (3) promoting the release of Pol II from bound DNA. The integrator complex is also involved in terminating the synthesis of non-coding Pol II transcripts, such as enhancer RNAs (eRNAs), small nuclear RNAs (snRNAs), telomerase RNAs and long non-coding RNAs (lncRNAs). Within the integrator complex, INTS10 is part of the integrator tail module that acts as a platform for the recruitment of transcription factors at promoters. May be not involved in the recruitment of cytoplasmic dynein to the nuclear envelope, probably as component of the integrator complex. The sequence is that of Integrator complex subunit 10 (INTS10) from Macaca fascicularis (Crab-eating macaque).